The sequence spans 384 residues: Acetylornithine aminotransferase (384 aa).

Pyridoxal 5'-phosphate-binding positions include 95–96 (GA) and F122. R125 is a binding site for N(2)-acetyl-L-ornithine. Position 207–210 (207–210 (DEIQ)) interacts with pyridoxal 5'-phosphate. K236 is modified (N6-(pyridoxal phosphate)lysine). S264 contributes to the N(2)-acetyl-L-ornithine binding site. T265 lines the pyridoxal 5'-phosphate pocket.

This sequence belongs to the class-III pyridoxal-phosphate-dependent aminotransferase family. ArgD subfamily. In terms of assembly, homodimer. Requires pyridoxal 5'-phosphate as cofactor.

It localises to the cytoplasm. The enzyme catalyses N(2)-acetyl-L-ornithine + 2-oxoglutarate = N-acetyl-L-glutamate 5-semialdehyde + L-glutamate. It participates in amino-acid biosynthesis; L-arginine biosynthesis; N(2)-acetyl-L-ornithine from L-glutamate: step 4/4. This is Acetylornithine aminotransferase from Halalkalibacterium halodurans (strain ATCC BAA-125 / DSM 18197 / FERM 7344 / JCM 9153 / C-125) (Bacillus halodurans).